A 171-amino-acid chain; its full sequence is Adenine phosphoribosyltransferase (171 aa).

Belongs to the purine/pyrimidine phosphoribosyltransferase family. In terms of assembly, homodimer.

It localises to the cytoplasm. It catalyses the reaction AMP + diphosphate = 5-phospho-alpha-D-ribose 1-diphosphate + adenine. It functions in the pathway purine metabolism; AMP biosynthesis via salvage pathway; AMP from adenine: step 1/1. Functionally, catalyzes a salvage reaction resulting in the formation of AMP, that is energically less costly than de novo synthesis. The chain is Adenine phosphoribosyltransferase from Ruminiclostridium cellulolyticum (strain ATCC 35319 / DSM 5812 / JCM 6584 / H10) (Clostridium cellulolyticum).